The chain runs to 332 residues: Azadirone synthase LFS (332 aa).

Residues 181–286 (ANANYTNMFH…RYSTGTFICP (106 aa)) enclose the Fe2OG dioxygenase domain. Residues H208, D210, and H269 each coordinate Fe cation. R277 serves as a coordination point for 2-oxoglutarate.

It belongs to the iron/ascorbate-dependent oxidoreductase family. Fe(2+) serves as cofactor. As to expression, mainly expressed in petioles and, to a lower extent, in roots.

The enzyme catalyses (1S,3bR,4R,5aR,9aR,9bR,11aS)-1-(1-hydroxy-4-oxobutan-2-yl)-3b,6,6,9a,11a-pentamethyl-7-oxo-1H,2H,3bH,4H,5H,5aH,6H,7H,9aH,9bH,10H,11H,11aH-cyclopenta[a]phenanthren-4-yl acetate + 2-oxoglutarate + O2 = azadirone + succinate + CO2 + 2 H2O. It participates in secondary metabolite biosynthesis; terpenoid biosynthesis. 2-oxoglutarate-Fe(II) type oxidoreductase involved in the biosynthesis of limonoids triterpene natural products such as azadirachtin, an antifeedant widely used as bioinsecticide, and possessing many medicinal applications including anti-tumoral, anti-malarial, anti-rheumatic, antibacterial, anti-inflammatory, anti-pyretic and diuretic effects. Catalyzes the formation of azadirone. This Melia azedarach (Chinaberry tree) protein is Azadirone synthase LFS.